A 146-amino-acid chain; its full sequence is Probable gamma-secretase subunit PEN-2 (146 aa).

Residues 1–26 form a disordered region; that stretch reads MEATRSDDPSLNPIRNRNPNPNPNPN. Residues 1–61 lie on the Lumenal side of the membrane; sequence MEATRSDDPS…SVDYARRFYK (61 aa). The segment covering 9–19 has biased composition (low complexity); sequence PSLNPIRNRNP. The chain crosses the membrane as a helical span at residues 62–82; that stretch reads FGFALLPWLWFVNCFYFWPVL. Residues 83 to 98 are Cytoplasmic-facing; that stretch reads RHSRAFPQIRNYVVRS. Residues 99–119 traverse the membrane as a helical segment; the sequence is AIGFSVFTALLSAWALTFSIG. Residues 120-146 are Lumenal-facing; sequence GEQLFGPLYDKLVMYNVADRLGLSGLA.

It belongs to the PEN-2 family. As to quaternary structure, probable component of the gamma-secretase complex, a complex composed of a presenilin homodimer, nicastrin, APH1 and PEN2.

It localises to the membrane. Functionally, probable subunit of the gamma-secretase complex, an endoprotease complex that catalyzes the intramembrane cleavage of integral membrane proteins such as Notch receptors. The polypeptide is Probable gamma-secretase subunit PEN-2 (Arabidopsis thaliana (Mouse-ear cress)).